The following is a 275-amino-acid chain: UPF0758 protein RL2068 (275 aa).

The segment at 1-45 is disordered; that stretch reads MAKGPVSTSSDDELPFETQEPIAADERSFFGGQPQKPSAPNARAA. Positions 153–275 constitute an MPN domain; sequence VLSSWSSVIQ…HVSLKGLKLI (123 aa). Residues H224, H226, and D237 each coordinate Zn(2+). The JAMM motif signature appears at 224–237; that stretch reads HNHPSGDPTPSRAD.

The protein belongs to the UPF0758 family.

The protein is UPF0758 protein RL2068 of Rhizobium johnstonii (strain DSM 114642 / LMG 32736 / 3841) (Rhizobium leguminosarum bv. viciae).